Here is a 477-residue protein sequence, read N- to C-terminus: MSDRSDPTHAIWQKVLAALTADDRITPQLHGFISLVEPKGVMTGTLYLEVPNDLTRGMLEQRIRVPLLNAIGSLDEAAGVSNFAIVVNPEIAQDAFAQHPEPAAEQPYIETPTITAPTDNPGLPASPSRGDSRLNPKYGFDTFVIGGSNRFAHAAAVAVAEAPAKAYNPLFIYGDSGLGKTHLLHAIGHYAISLYPGIRVRYVSSEEFTNDFINSIANNRSSLFQSRYRDNDILLIDDIQFLQGKDSTQEAFFHTFNTLHDHNKQVVITSDLPPKHLTGFEDRMRSRFEWGLITDVQAPDLETRIAILRKKAQSEKLQVPDDILEYMATKVTSNIRELEGTLIRVTAFASLNKTPVDLALVQTVLKDLITLDEDNVIAPVDIINHTAAYFKLTVDDLYGSSRSQAVATARQIAMYLCRELTNLSLPKIGQLFGNRDHTTVMYANKKITELMKERRSIYNQVTELTSRIKQNHRYGKM.

The tract at residues M1–V87 is domain I, interacts with DnaA modulators. The domain II stretch occupies residues V87–S132. The interval P112–D131 is disordered. The interval R133–A349 is domain III, AAA+ region. 4 residues coordinate ATP: G177, G179, K180, and T181. The tract at residues S350–M477 is domain IV, binds dsDNA.

It belongs to the DnaA family. In terms of assembly, oligomerizes as a right-handed, spiral filament on DNA at oriC.

It localises to the cytoplasm. Its function is as follows. Plays an essential role in the initiation and regulation of chromosomal replication. ATP-DnaA binds to the origin of replication (oriC) to initiate formation of the DNA replication initiation complex once per cell cycle. Binds the DnaA box (a 9 base pair repeat at the origin) and separates the double-stranded (ds)DNA. Forms a right-handed helical filament on oriC DNA; dsDNA binds to the exterior of the filament while single-stranded (ss)DNA is stabiized in the filament's interior. The ATP-DnaA-oriC complex binds and stabilizes one strand of the AT-rich DNA unwinding element (DUE), permitting loading of DNA polymerase. After initiation quickly degrades to an ADP-DnaA complex that is not apt for DNA replication. Binds acidic phospholipids. This chain is Chromosomal replication initiator protein DnaA, found in Clavibacter michiganensis subsp. michiganensis (strain NCPPB 382).